Reading from the N-terminus, the 353-residue chain is DNA integrity scanning protein DisA (353 aa).

Residues 6–144 (DKELMNILKI…GGIKYVLRDS (139 aa)) form the DAC domain. ATP-binding positions include Gly73, Leu91, and 104–108 (TRHRT).

Belongs to the DisA family. Homooctamer. It depends on Mg(2+) as a cofactor.

It carries out the reaction 2 ATP = 3',3'-c-di-AMP + 2 diphosphate. Functionally, participates in a DNA-damage check-point that is active prior to asymmetric division when DNA is damaged. DisA forms globular foci that rapidly scan along the chromosomes during sporulation, searching for lesions. When a lesion is present, DisA pauses at the lesion site. This triggers a cellular response that culminates in a temporary block in sporulation initiation. Its function is as follows. Also has diadenylate cyclase activity, catalyzing the condensation of 2 ATP molecules into cyclic di-AMP (c-di-AMP). c-di-AMP acts as a signaling molecule that couples DNA integrity with progression of sporulation. The rise in c-di-AMP level generated by DisA while scanning the chromosome, operates as a positive signal that advances sporulation; upon encountering a lesion, the DisA focus arrests at the damaged site and halts c-di-AMP synthesis. In Clostridium botulinum (strain Okra / Type B1), this protein is DNA integrity scanning protein DisA.